A 394-amino-acid polypeptide reads, in one-letter code: 1-deoxy-D-xylulose 5-phosphate reductoisomerase (394 aa).

Residues T10, G11, S12, I13, G38, R39, N40, and N123 each coordinate NADPH. K124 is a 1-deoxy-D-xylulose 5-phosphate binding site. E125 serves as a coordination point for NADPH. D149 provides a ligand contact to Mn(2+). 1-deoxy-D-xylulose 5-phosphate contacts are provided by S150, E151, S175, and H198. E151 is a binding site for Mn(2+). G204 provides a ligand contact to NADPH. 1-deoxy-D-xylulose 5-phosphate is bound by residues S211, N216, K217, and E220. E220 provides a ligand contact to Mn(2+).

This sequence belongs to the DXR family. Mg(2+) is required as a cofactor. It depends on Mn(2+) as a cofactor.

The enzyme catalyses 2-C-methyl-D-erythritol 4-phosphate + NADP(+) = 1-deoxy-D-xylulose 5-phosphate + NADPH + H(+). The protein operates within isoprenoid biosynthesis; isopentenyl diphosphate biosynthesis via DXP pathway; isopentenyl diphosphate from 1-deoxy-D-xylulose 5-phosphate: step 1/6. Its function is as follows. Catalyzes the NADPH-dependent rearrangement and reduction of 1-deoxy-D-xylulose-5-phosphate (DXP) to 2-C-methyl-D-erythritol 4-phosphate (MEP). The polypeptide is 1-deoxy-D-xylulose 5-phosphate reductoisomerase (Cereibacter sphaeroides (strain ATCC 17023 / DSM 158 / JCM 6121 / CCUG 31486 / LMG 2827 / NBRC 12203 / NCIMB 8253 / ATH 2.4.1.) (Rhodobacter sphaeroides)).